Consider the following 251-residue polypeptide: Ubiquinone/menaquinone biosynthesis C-methyltransferase UbiE (251 aa).

S-adenosyl-L-methionine contacts are provided by residues Thr74, Asp95, 123 to 124 (NA), and Ser140.

It belongs to the class I-like SAM-binding methyltransferase superfamily. MenG/UbiE family.

It catalyses the reaction a 2-demethylmenaquinol + S-adenosyl-L-methionine = a menaquinol + S-adenosyl-L-homocysteine + H(+). The enzyme catalyses a 2-methoxy-6-(all-trans-polyprenyl)benzene-1,4-diol + S-adenosyl-L-methionine = a 5-methoxy-2-methyl-3-(all-trans-polyprenyl)benzene-1,4-diol + S-adenosyl-L-homocysteine + H(+). It participates in quinol/quinone metabolism; menaquinone biosynthesis; menaquinol from 1,4-dihydroxy-2-naphthoate: step 2/2. The protein operates within cofactor biosynthesis; ubiquinone biosynthesis. Its function is as follows. Methyltransferase required for the conversion of demethylmenaquinol (DMKH2) to menaquinol (MKH2) and the conversion of 2-polyprenyl-6-methoxy-1,4-benzoquinol (DDMQH2) to 2-polyprenyl-3-methyl-6-methoxy-1,4-benzoquinol (DMQH2). The polypeptide is Ubiquinone/menaquinone biosynthesis C-methyltransferase UbiE (Pectobacterium carotovorum subsp. carotovorum (strain PC1)).